We begin with the raw amino-acid sequence, 421 residues long: Serine--tRNA ligase (421 aa).

Thr229 to Glu231 provides a ligand contact to L-serine. ATP is bound at residue Arg260–Glu262. Glu283 serves as a coordination point for L-serine. Glu347 to Ser350 contacts ATP. Ser382 serves as a coordination point for L-serine.

It belongs to the class-II aminoacyl-tRNA synthetase family. Type-1 seryl-tRNA synthetase subfamily. Homodimer. The tRNA molecule binds across the dimer.

It localises to the cytoplasm. It catalyses the reaction tRNA(Ser) + L-serine + ATP = L-seryl-tRNA(Ser) + AMP + diphosphate + H(+). The catalysed reaction is tRNA(Sec) + L-serine + ATP = L-seryl-tRNA(Sec) + AMP + diphosphate + H(+). It functions in the pathway aminoacyl-tRNA biosynthesis; selenocysteinyl-tRNA(Sec) biosynthesis; L-seryl-tRNA(Sec) from L-serine and tRNA(Sec): step 1/1. Catalyzes the attachment of serine to tRNA(Ser). Is also able to aminoacylate tRNA(Sec) with serine, to form the misacylated tRNA L-seryl-tRNA(Sec), which will be further converted into selenocysteinyl-tRNA(Sec). The polypeptide is Serine--tRNA ligase (Symbiobacterium thermophilum (strain DSM 24528 / JCM 14929 / IAM 14863 / T)).